A 409-amino-acid polypeptide reads, in one-letter code: Serine/threonine transporter SstT (409 aa).

The next 9 helical transmembrane spans lie at 24-44, 48-68, 82-102, 142-162, 194-214, 218-238, 292-312, 319-339, and 365-385; these read LALG…AGLF, FVGA…AATI, IIVL…IAGM, AIAN…GAAL, LGIF…ALAG, LLAV…PAIV, IPLG…VLAM, GIQV…VSAC, and VAMQ…SAET.

Belongs to the dicarboxylate/amino acid:cation symporter (DAACS) (TC 2.A.23) family.

The protein localises to the cell inner membrane. It catalyses the reaction L-serine(in) + Na(+)(in) = L-serine(out) + Na(+)(out). The catalysed reaction is L-threonine(in) + Na(+)(in) = L-threonine(out) + Na(+)(out). Functionally, involved in the import of serine and threonine into the cell, with the concomitant import of sodium (symport system). This is Serine/threonine transporter SstT from Neisseria meningitidis serogroup C / serotype 2a (strain ATCC 700532 / DSM 15464 / FAM18).